Here is a 98-residue protein sequence, read N- to C-terminus: Keratinocyte differentiation-associated protein (98 aa).

An N-terminal signal peptide occupies residues 1–22 (MKIPILPIVALLSLLALHAAQG).

In terms of tissue distribution, ubiquitously expressed in stratified epithelium.

It is found in the secreted. In terms of biological role, may act as a soluble regulator of keratinocyte differentiation. May play an important role in embryonic skin morphogenesis. In Rattus norvegicus (Rat), this protein is Keratinocyte differentiation-associated protein.